Consider the following 470-residue polypeptide: Siroheme synthase (470 aa).

Positions 1-203 (MDYLPIFVEL…GQIQQAEKQL (203 aa)) are precorrin-2 dehydrogenase /sirohydrochlorin ferrochelatase. NAD(+)-binding positions include 22–23 (EV) and 43–44 (PE). Phosphoserine is present on Ser-128. The interval 214 to 470 (GELALVGAGP…ISRPAVVDFA (257 aa)) is uroporphyrinogen-III C-methyltransferase. Residue Pro-223 coordinates S-adenosyl-L-methionine. Asp-246 functions as the Proton acceptor in the catalytic mechanism. Lys-268 serves as the catalytic Proton donor. Residues 299-301 (GGD), Ile-304, 329-330 (TA), Met-381, and Gly-410 each bind S-adenosyl-L-methionine.

The protein in the N-terminal section; belongs to the precorrin-2 dehydrogenase / sirohydrochlorin ferrochelatase family. It in the C-terminal section; belongs to the precorrin methyltransferase family.

It carries out the reaction uroporphyrinogen III + 2 S-adenosyl-L-methionine = precorrin-2 + 2 S-adenosyl-L-homocysteine + H(+). The catalysed reaction is precorrin-2 + NAD(+) = sirohydrochlorin + NADH + 2 H(+). It catalyses the reaction siroheme + 2 H(+) = sirohydrochlorin + Fe(2+). The protein operates within cofactor biosynthesis; adenosylcobalamin biosynthesis; precorrin-2 from uroporphyrinogen III: step 1/1. It participates in cofactor biosynthesis; adenosylcobalamin biosynthesis; sirohydrochlorin from precorrin-2: step 1/1. It functions in the pathway porphyrin-containing compound metabolism; siroheme biosynthesis; precorrin-2 from uroporphyrinogen III: step 1/1. Its pathway is porphyrin-containing compound metabolism; siroheme biosynthesis; siroheme from sirohydrochlorin: step 1/1. The protein operates within porphyrin-containing compound metabolism; siroheme biosynthesis; sirohydrochlorin from precorrin-2: step 1/1. Its function is as follows. Multifunctional enzyme that catalyzes the SAM-dependent methylations of uroporphyrinogen III at position C-2 and C-7 to form precorrin-2 via precorrin-1. Then it catalyzes the NAD-dependent ring dehydrogenation of precorrin-2 to yield sirohydrochlorin. Finally, it catalyzes the ferrochelation of sirohydrochlorin to yield siroheme. The chain is Siroheme synthase from Photorhabdus laumondii subsp. laumondii (strain DSM 15139 / CIP 105565 / TT01) (Photorhabdus luminescens subsp. laumondii).